A 535-amino-acid chain; its full sequence is Bifunctional purine biosynthesis protein PurH (535 aa).

The MGS-like domain occupies 6–151 (TRLPVRRALI…KNHKDVAIVV (146 aa)).

Belongs to the PurH family.

The catalysed reaction is (6R)-10-formyltetrahydrofolate + 5-amino-1-(5-phospho-beta-D-ribosyl)imidazole-4-carboxamide = 5-formamido-1-(5-phospho-D-ribosyl)imidazole-4-carboxamide + (6S)-5,6,7,8-tetrahydrofolate. It catalyses the reaction IMP + H2O = 5-formamido-1-(5-phospho-D-ribosyl)imidazole-4-carboxamide. Its pathway is purine metabolism; IMP biosynthesis via de novo pathway; 5-formamido-1-(5-phospho-D-ribosyl)imidazole-4-carboxamide from 5-amino-1-(5-phospho-D-ribosyl)imidazole-4-carboxamide (10-formyl THF route): step 1/1. It participates in purine metabolism; IMP biosynthesis via de novo pathway; IMP from 5-formamido-1-(5-phospho-D-ribosyl)imidazole-4-carboxamide: step 1/1. This Pseudomonas putida (strain GB-1) protein is Bifunctional purine biosynthesis protein PurH.